The primary structure comprises 189 residues: MPKTRRGPRRSQRKRPPTPWPTSQGLDKVFFTDIQSTCLETVYKATGAPSLGDYVRPAYIVTPYWPPVQSIRSPRTPSMDALSAQLYSSLSLGSPPSPPREPLKPSRSLPHRPLIQPPTFHPPSSRPYANTPPSEMGAWSPPLGSSSQACPSPTPASGPKTCTPSGEAPSSACTSISFPPPSPGPSCPR.

Basic residues predominate over residues 1–16 (MPKTRRGPRRSQRKRP). Positions 1 to 26 (MPKTRRGPRRSQRKRPPTPWPTSQGL) are disordered. Residues 2 to 18 (PKTRRGPRRSQRKRPPT) carry the Nuclear localization signal, and RNA-binding (RxRE) motif. Residues 56–70 (RPAYIVTPYWPPVQS) form a homomultimerization region. Ser-70 is subject to Phosphoserine; by host. The Nuclear export signal motif lies at 82 to 93 (LSAQLYSSLSLG). Residues 87 to 189 (YSSLSLGSPP…PPSPGPSCPR (103 aa)) form a disordered region. Positions 115–125 (IQPPTFHPPSS) are enriched in pro residues. Residues 123–131 (PSSRPYANT) are homomultimerization. Thr-174 carries the phosphothreonine; by host modification. Ser-177 is subject to Phosphoserine; by host. A compositionally biased stretch (pro residues) spans 178–189 (FPPPSPGPSCPR).

This sequence belongs to the deltaretrovirus Rex protein family. In terms of assembly, homomultimer. Multimeric assembly is essential for activity and involves XPO1. Binds to human XPO1 and KPNB1. Interacts (via N-terminal nuclear localization signal) with human NPM1. Post-translationally, phosphorylated.

It localises to the host nucleus. Its subcellular location is the host nucleolus. The protein localises to the host cytoplasm. Its function is as follows. Rex escorts unspliced gag-pro-pol and singly spliced env mRNAs out of the nucleus of infected cells. These mRNAs carry a recognition sequence called Rex responsive element (RxRE or XRE) located at the 3' region of the long terminal repeat (LTR). This function is essential since most HTLV proteins are translated from unspliced or partially spliced pre-mRNAs that cannot exit the nucleus by the pathway used by fully processed cellular mRNAs. Rex itself is translated from a fully spliced mRNA that probably readily exits the nucleus. Rex's nuclear localization signal (NLS) binds directly to KPNB1/importin beta-1 without previous binding to KPNA1/importin alpha-1. KPNB1 binds to the GDP bound form of RAN (Ran-GDP) and targets Rex to the nucleus. In the nucleus, the conversion from Ran-GDP to Ran-GTP dissociates Rex from KPNB1 and allows Rex's binding to the RRE in viral pre-mRNAs. Rex multimerizes on the RRE via cooperative assembly. This multimerization is critical for its full biological activity, since it may shield the viral RNA from being spliced or down-regulated, and probably exposes Rex's nuclear export signal (NES) to the surface. Rex can then form a complex with XPO1/CRM1, RANBP3 and Ran-GTP, leading to nuclear export of the complex. Conversion from Ran-GTP to Ran-GDP mediates dissociation of the Rex/RRE/XPO1/RANBP3/RAN complex, so that Rex can return to the nucleus for a subsequent round of export. The protein is Protein Rex of Homo sapiens (Human).